Here is a 252-residue protein sequence, read N- to C-terminus: uncharacterized protein (252 aa).

The N-terminal stretch at 1 to 25 (MRKKKFLSRFAFGSLFLLCGTILSA) is a signal peptide. The N-palmitoyl cysteine moiety is linked to residue C26. C26 carries the S-diacylglycerol cysteine lipid modification.

Belongs to the MG439/MG440 family.

The protein resides in the cell membrane. This is an uncharacterized protein from Mycoplasma pneumoniae (strain ATCC 29342 / M129 / Subtype 1) (Mycoplasmoides pneumoniae).